Here is a 188-residue protein sequence, read N- to C-terminus: Putative manganese efflux pump MntP (188 aa).

The next 6 helical transmembrane spans lie at 3–23 (LYAL…VALA), 35–55 (IAAT…AGWV), 63–83 (FISE…GLKM), 104–126 (WMTV…GLAF), 140–160 (MAAT…GVLF), and 167–187 (AGGL…LGLI).

It belongs to the MntP (TC 9.B.29) family.

It is found in the cell inner membrane. Functionally, probably functions as a manganese efflux pump. The polypeptide is Putative manganese efflux pump MntP (Neisseria gonorrhoeae (strain ATCC 700825 / FA 1090)).